The primary structure comprises 177 residues: Large ribosomal subunit protein uL6 (177 aa).

It belongs to the universal ribosomal protein uL6 family. In terms of assembly, part of the 50S ribosomal subunit.

This protein binds to the 23S rRNA, and is important in its secondary structure. It is located near the subunit interface in the base of the L7/L12 stalk, and near the tRNA binding site of the peptidyltransferase center. The chain is Large ribosomal subunit protein uL6 from Laribacter hongkongensis (strain HLHK9).